A 202-amino-acid polypeptide reads, in one-letter code: Adenylyl-sulfate kinase (202 aa).

An ATP-binding site is contributed by 35-42 (GLSGSGKS). Ser-109 (phosphoserine intermediate) is an active-site residue.

This sequence belongs to the APS kinase family.

It carries out the reaction adenosine 5'-phosphosulfate + ATP = 3'-phosphoadenylyl sulfate + ADP + H(+). The protein operates within sulfur metabolism; hydrogen sulfide biosynthesis; sulfite from sulfate: step 2/3. In terms of biological role, catalyzes the synthesis of activated sulfate. This chain is Adenylyl-sulfate kinase, found in Bacteroides fragilis (strain ATCC 25285 / DSM 2151 / CCUG 4856 / JCM 11019 / LMG 10263 / NCTC 9343 / Onslow / VPI 2553 / EN-2).